Here is a 113-residue protein sequence, read N- to C-terminus: Large ribosomal subunit protein uL24 (113 aa).

Belongs to the universal ribosomal protein uL24 family. As to quaternary structure, part of the 50S ribosomal subunit.

In terms of biological role, one of two assembly initiator proteins, it binds directly to the 5'-end of the 23S rRNA, where it nucleates assembly of the 50S subunit. One of the proteins that surrounds the polypeptide exit tunnel on the outside of the subunit. The protein is Large ribosomal subunit protein uL24 of Chlamydia abortus (strain DSM 27085 / S26/3) (Chlamydophila abortus).